Reading from the N-terminus, the 185-residue chain is Ribosome-recycling factor (185 aa).

It belongs to the RRF family.

The protein resides in the cytoplasm. Its function is as follows. Responsible for the release of ribosomes from messenger RNA at the termination of protein biosynthesis. May increase the efficiency of translation by recycling ribosomes from one round of translation to another. This is Ribosome-recycling factor from Thermus thermophilus (strain ATCC BAA-163 / DSM 7039 / HB27).